A 695-amino-acid chain; its full sequence is Ubiquitin carboxyl-terminal hydrolase 20 (695 aa).

2 disordered regions span residues 1–20 (MLMA…SSIL) and 42–162 (SLAL…SLFY). 2 stretches are compositionally biased toward low complexity: residues 9–20 (PSSILPRSSSIL) and 61–86 (NHDS…SQSV). Positions 112 to 124 (DDIDDDIWGDDDL) are enriched in acidic residues. Residues 176–476 (AGLWNLGNSC…DSYILFYARE (301 aa)) form the USP domain. The active-site Nucleophile is the Cys-185. The Proton acceptor role is filled by His-435. The span at 556–571 (SAESSSGEESPMGELL) shows a compositional bias: low complexity. Disordered regions lie at residues 556–585 (SAES…PCTE) and 674–695 (AREL…LKTT).

Belongs to the peptidase C19 family.

The catalysed reaction is Thiol-dependent hydrolysis of ester, thioester, amide, peptide and isopeptide bonds formed by the C-terminal Gly of ubiquitin (a 76-residue protein attached to proteins as an intracellular targeting signal).. Recognizes and hydrolyzes the peptide bond at the C-terminal Gly of ubiquitin. Involved in the processing of poly-ubiquitin precursors as well as that of ubiquitinated proteins. This Arabidopsis thaliana (Mouse-ear cress) protein is Ubiquitin carboxyl-terminal hydrolase 20 (UBP20).